Consider the following 1096-residue polypeptide: Carbamoyl phosphate synthase large chain (1096 aa).

A carboxyphosphate synthetic domain region spans residues 1–402 (MPKRDDINSV…ALQKALRSLE (402 aa)). Residues R129, R169, G175, G176, E208, I210, E215, G241, V242, H243, Q285, and E299 each coordinate ATP. The region spanning 133 to 328 (KDLVIESGAD…IAKIAAKLAI (196 aa)) is the ATP-grasp 1 domain. Q285, E299, and N301 together coordinate Mg(2+). The Mn(2+) site is built by Q285, E299, and N301. An oligomerization domain region spans residues 403-547 (KRGSSFHWGP…YSSYDSETEI (145 aa)). Residues 548–950 (VPSDRRKVII…AFAKSQEAAF (403 aa)) are carbamoyl phosphate synthetic domain. In terms of domain architecture, ATP-grasp 2 spans 676–870 (SGILDTAGLV…LAKAASLVMV (195 aa)). Positions 712, 754, 756, 761, 786, 787, 788, 789, 829, and 841 each coordinate ATP. Positions 829, 841, and 843 each coordinate Mg(2+). Mn(2+) is bound by residues Q829, E841, and N843. Residues 951–1095 (GGLPLSGTVF…QDYAIAREAR (145 aa)) form the MGS-like domain. The interval 951–1096 (GGLPLSGTVF…DYAIAREARR (146 aa)) is allosteric domain.

The protein belongs to the CarB family. In terms of assembly, composed of two chains; the small (or glutamine) chain promotes the hydrolysis of glutamine to ammonia, which is used by the large (or ammonia) chain to synthesize carbamoyl phosphate. Tetramer of heterodimers (alpha,beta)4. Mg(2+) serves as cofactor. It depends on Mn(2+) as a cofactor.

The catalysed reaction is hydrogencarbonate + L-glutamine + 2 ATP + H2O = carbamoyl phosphate + L-glutamate + 2 ADP + phosphate + 2 H(+). The enzyme catalyses hydrogencarbonate + NH4(+) + 2 ATP = carbamoyl phosphate + 2 ADP + phosphate + 2 H(+). The protein operates within amino-acid biosynthesis; L-arginine biosynthesis; carbamoyl phosphate from bicarbonate: step 1/1. It functions in the pathway pyrimidine metabolism; UMP biosynthesis via de novo pathway; (S)-dihydroorotate from bicarbonate: step 1/3. Its function is as follows. Large subunit of the glutamine-dependent carbamoyl phosphate synthetase (CPSase). CPSase catalyzes the formation of carbamoyl phosphate from the ammonia moiety of glutamine, carbonate, and phosphate donated by ATP, constituting the first step of 2 biosynthetic pathways, one leading to arginine and/or urea and the other to pyrimidine nucleotides. The large subunit (synthetase) binds the substrates ammonia (free or transferred from glutamine from the small subunit), hydrogencarbonate and ATP and carries out an ATP-coupled ligase reaction, activating hydrogencarbonate by forming carboxy phosphate which reacts with ammonia to form carbamoyl phosphate. This is Carbamoyl phosphate synthase large chain from Clavibacter michiganensis subsp. michiganensis (strain NCPPB 382).